The following is a 194-amino-acid chain: Calcium-binding protein J (194 aa).

EF-hand domains are found at residues 62-97 (WDKD…MTKA) and 98-133 (PVVE…AVAC). Ca(2+)-binding residues include D75, D77, N79, E86, D111, D113, S115, H117, and E122.

This sequence belongs to the recoverin family.

In Dictyostelium discoideum (Social amoeba), this protein is Calcium-binding protein J (cbpJ).